The following is a 713-amino-acid chain: MARARGSPCPPLPPGRMSWPHGALLFLWLFSPPLGAGGGGVAVTSAAGGGSPPATSCPVACSCSNQASRVICTRRDLAEVPASIPVNTRYLNLQENGIQVIRTDTFKHLRHLEILQLSKNLVRKIEVGAFNGLPSLNTLELFDNRLTTVPTQAFEYLSKLRELWLRNNPIESIPSYAFNRVPSLRRLDLGELKRLEYISEAAFEGLVNLRYLNLGMCNLKDIPNLTALVRLEELELSGNRLDLIRPGSFQGLTSLRKLWLMHAQVATIERNAFDDLKSLEELNLSHNNLMSLPHDLFTPLHRLERVHLNHNPWHCNCDVLWLSWWLKETVPSNTTCCARCHAPAGLKGRYIGELDQSHFTCYAPVIVEPPTDLNVTEGMAAELKCRTGTSMTSVNWLTPNGTLMTHGSYRVRISVLHDGTLNFTNVTVQDTGQYTCMVTNSAGNTTASATLNVSAVDPVAAGGTGSGGGGPGGSGGVGGGSGGYTYFTTVTVETLETQPGEEALQPRGTEKEPPGPTTDGVWGGGRPGDAAGPASSSTTAPAPRSSRPTEKAFTVPITDVTENALKDLDDVMKTTKIIIGCFVAITFMAAVMLVAFYKLRKQHQLHKHHGPTRTVEIINVEDELPAASAVSVAAAAAVASGGGVGGDSHLALPALERDHLNHHHYVAAAFKAHYSSNPSGGGCGGKGPPGLNSIHEPLLFKSGSKENVQETQI.

Positions 1–35 (MARARGSPCPPLPPGRMSWPHGALLFLWLFSPPLG) are cleaved as a signal peptide. Over 36 to 576 (AGGGGVAVTS…DLDDVMKTTK (541 aa)) the chain is Extracellular. Residues 48–86 (GGGSPPATSCPVACSCSNQASRVICTRRDLAEVPASIPV) enclose the LRRNT domain. LRR repeat units lie at residues 87–108 (NTRY…TFKH), 111–132 (HLEI…AFNG), 135–156 (SLNT…AFEY), 159–180 (KLRE…AFNR), 183–205 (SLRR…AFEG), 208–229 (NLRY…TALV), 230–251 (RLEE…SFQG), 254–275 (SLRK…AFDD), and 278–299 (SLEE…LFTP). An N-linked (GlcNAc...) asparagine glycan is attached at Asn-224. Asn-283, Asn-333, Asn-374, Asn-400, Asn-422, Asn-425, Asn-444, and Asn-452 each carry an N-linked (GlcNAc...) asparagine glycan. The LRRCT domain occupies 311–363 (NPWHCNCDVLWLSWWLKETVPSNTTCCARCHAPAGLKGRYIGELDQSHFTCYA). The Ig-like C2-type domain maps to 364 to 452 (PVIVEPPTDL…GNTTASATLN (89 aa)). Residues Cys-385 and Cys-436 are joined by a disulfide bond. The interval 497–551 (TQPGEEALQPRGTEKEPPGPTTDGVWGGGRPGDAAGPASSSTTAPAPRSSRPTEK) is disordered. Positions 528-546 (GDAAGPASSSTTAPAPRSS) are enriched in low complexity. The chain crosses the membrane as a helical span at residues 577-597 (IIIGCFVAITFMAAVMLVAFY). Residues 598 to 713 (KLRKQHQLHK…SKENVQETQI (116 aa)) lie on the Cytoplasmic side of the membrane. Ser-693 carries the post-translational modification Phosphoserine. Residues 694 to 713 (IHEPLLFKSGSKENVQETQI) are disordered. Over residues 703–713 (GSKENVQETQI) the composition is skewed to basic and acidic residues.

In terms of assembly, interacts with PTPRF. Interacts with DLG4. In terms of processing, N-glycosylated. O-glycosylated; contains sialic acid.

It is found in the membrane. It localises to the presynaptic cell membrane. In terms of biological role, synaptic adhesion protein. Regulates the formation of excitatory synapses. The trans-synaptic adhesion between LRRC4B and PTPRF regulates the formation of excitatory synapses in a bidirectional manner. This Homo sapiens (Human) protein is Leucine-rich repeat-containing protein 4B (LRRC4B).